The primary structure comprises 313 residues: tRNA dimethylallyltransferase (313 aa).

Residue G9 to S16 participates in ATP binding. A substrate-binding site is contributed by T11 to S16.

This sequence belongs to the IPP transferase family. As to quaternary structure, monomer. The cofactor is Mg(2+).

The enzyme catalyses adenosine(37) in tRNA + dimethylallyl diphosphate = N(6)-dimethylallyladenosine(37) in tRNA + diphosphate. Catalyzes the transfer of a dimethylallyl group onto the adenine at position 37 in tRNAs that read codons beginning with uridine, leading to the formation of N6-(dimethylallyl)adenosine (i(6)A). This is tRNA dimethylallyltransferase from Nocardia farcinica (strain IFM 10152).